The primary structure comprises 665 residues: Mitochondrial Rho GTPase 1 (665 aa).

Topologically, residues 1–634 (MTNDVIRIVV…NQDPEEETNT (634 aa)) are cytoplasmic. In terms of domain architecture, Miro 1 spans 3–177 (NDVIRIVVCG…FYLCQKAVMH (175 aa)). GTP is bound by residues 12–19 (GDEGVGKS), 61–67 (DTQFSNS), and 119–122 (NVFD). EF-hand domains follow at residues 193-228 (NAVA…CFGR) and 313-348 (EGYR…TPGI). Ca(2+)-binding residues include D206, D208, D210, Y212, E217, D326, D328, D330, and E337. In terms of domain architecture, Miro 2 spans 452–618 (RSVFNCFVLG…FIQLAEAAQQ (167 aa)). Residues 461–468 (GSHMSGKT), 498–502 (EMTGG), and 567–570 (LKAD) each bind GTP. Residues 635–655 (IMPFALAGGATVLLAAAVAWI) traverse the membrane as a helical; Anchor for type IV membrane protein segment. Topologically, residues 656–665 (FKNVRVAGRE) are mitochondrial intermembrane.

This sequence belongs to the mitochondrial Rho GTPase family.

Its subcellular location is the mitochondrion outer membrane. In terms of biological role, mitochondrial GTPase involved in mitochondrial trafficking. Probably involved in control of anterograde transport of mitochondria and their subcellular distribution. The chain is Mitochondrial Rho GTPase 1 (GEM1) from Yarrowia lipolytica (strain CLIB 122 / E 150) (Yeast).